The chain runs to 404 residues: CCA-adding enzyme (404 aa).

ATP contacts are provided by Gly27 and Arg30. Positions 27 and 30 each coordinate CTP. Residues Asp40 and Asp42 each coordinate Mg(2+). ATP is bound by residues Arg111, Asp154, Arg157, Arg160, and Arg163. 5 residues coordinate CTP: Arg111, Asp154, Arg157, Arg160, and Arg163.

This sequence belongs to the tRNA nucleotidyltransferase/poly(A) polymerase family. Bacterial CCA-adding enzyme type 3 subfamily. In terms of assembly, homodimer. Requires Mg(2+) as cofactor.

The catalysed reaction is a tRNA precursor + 2 CTP + ATP = a tRNA with a 3' CCA end + 3 diphosphate. It catalyses the reaction a tRNA with a 3' CCA end + 2 CTP + ATP = a tRNA with a 3' CCACCA end + 3 diphosphate. Catalyzes the addition and repair of the essential 3'-terminal CCA sequence in tRNAs without using a nucleic acid template. Adds these three nucleotides in the order of C, C, and A to the tRNA nucleotide-73, using CTP and ATP as substrates and producing inorganic pyrophosphate. tRNA 3'-terminal CCA addition is required both for tRNA processing and repair. Also involved in tRNA surveillance by mediating tandem CCA addition to generate a CCACCA at the 3' terminus of unstable tRNAs. While stable tRNAs receive only 3'-terminal CCA, unstable tRNAs are marked with CCACCA and rapidly degraded. The structural flexibility of RNA controls the choice between CCA versus CCACCA addition: following the first CCA addition cycle, nucleotide-binding to the active site triggers a clockwise screw motion, producing torque on the RNA. This ejects stable RNAs, whereas unstable RNAs are refolded while bound to the enzyme and subjected to a second CCA catalytic cycle. This Geobacillus stearothermophilus (Bacillus stearothermophilus) protein is CCA-adding enzyme.